The chain runs to 499 residues: Glutamyl-tRNA(Gln) amidotransferase subunit A, mitochondrial (499 aa).

Catalysis depends on charge relay system residues Lys61 and Ser139. Catalysis depends on Ser163, which acts as the Acyl-ester intermediate.

The protein belongs to the amidase family. GatA subfamily. Subunit of the heterotrimeric GatCAB amidotransferase (AdT) complex, composed of A, B and C subunits.

Its subcellular location is the mitochondrion. The enzyme catalyses L-glutamyl-tRNA(Gln) + L-glutamine + ATP + H2O = L-glutaminyl-tRNA(Gln) + L-glutamate + ADP + phosphate + H(+). Allows the formation of correctly charged Gln-tRNA(Gln) through the transamidation of misacylated Glu-tRNA(Gln) in the mitochondria. The reaction takes place in the presence of glutamine and ATP through an activated gamma-phospho-Glu-tRNA(Gln). This chain is Glutamyl-tRNA(Gln) amidotransferase subunit A, mitochondrial, found in Coccidioides posadasii (strain C735) (Valley fever fungus).